A 44-amino-acid polypeptide reads, in one-letter code: Defensin-like protein 1 (44 aa).

Gln1 is modified (pyrrolidone carboxylic acid). Cys15 and Cys36 are oxidised to a cystine.

This sequence belongs to the DEFL family. In terms of assembly, forms oligomers in its native state.

It localises to the secreted. In terms of biological role, possesses antifungal activity sensitive to inorganic cations. The chain is Defensin-like protein 1 (AFP1) from Brassica napus (Rape).